Consider the following 279-residue polypeptide: Protein phosphatase 1 regulatory subunit 3E (279 aa).

2 positions are modified to phosphoserine: Ser16 and Ser33. Residues 28 to 86 are disordered; sequence RSQRPSLEEEPEEEPGEGGTRFGARSRAHAPSRGRRARSAPAGGGGARAPRSRSPDTRK. Positions 51 to 65 are enriched in basic residues; that stretch reads ARSRAHAPSRGRRAR. Ser66 carries the phosphoserine modification. Positions 87–90 match the PP1-binding motif motif; the sequence is RVRF. The region spanning 154 to 259 is the CBM21 domain; that stretch reads AARLLTQRIC…NNGGRDYALR (106 aa). Positions 176–198 are glycogen-binding motif; the sequence is GSARVVDLAYEKRVSVRWSADGW. The interval 248–256 is substrate-binding motif; the sequence is WDNNGGRDY.

In terms of tissue distribution, expressed in skeletal muscle and heart with barely detectable levels in liver.

Its function is as follows. Acts as a glycogen-targeting subunit for PP1. PP1 is involved in glycogen metabolism and contributes to the activation of glycogen synthase leading to an increase in glycogen synthesis. The polypeptide is Protein phosphatase 1 regulatory subunit 3E (PPP1R3E) (Homo sapiens (Human)).